The following is a 131-amino-acid chain: Small ribosomal subunit protein uS11 (131 aa).

The protein belongs to the universal ribosomal protein uS11 family. In terms of assembly, part of the 30S ribosomal subunit. Interacts with proteins S7 and S18. Binds to IF-3.

Located on the platform of the 30S subunit, it bridges several disparate RNA helices of the 16S rRNA. Forms part of the Shine-Dalgarno cleft in the 70S ribosome. The sequence is that of Small ribosomal subunit protein uS11 from Paramagnetospirillum magneticum (strain ATCC 700264 / AMB-1) (Magnetospirillum magneticum).